Consider the following 93-residue polypeptide: Large ribosomal subunit protein bL36m (93 aa).

Residues 1-35 (MFLQTLRLTMPRMFLHMKPSPITITRACTVPSLLS) constitute a mitochondrion transit peptide.

This sequence belongs to the bacterial ribosomal protein bL36 family. In terms of assembly, component of the mitochondrial large ribosomal subunit (mt-LSU). Mature yeast 74S mitochondrial ribosomes consist of a small (37S) and a large (54S) subunit. The 37S small subunit contains a 15S ribosomal RNA (15S mt-rRNA) and 34 different proteins. The 54S large subunit contains a 21S rRNA (21S mt-rRNA) and 46 different proteins. bL36m has a zinc binding site.

The protein resides in the mitochondrion. Component of the mitochondrial ribosome (mitoribosome), a dedicated translation machinery responsible for the synthesis of mitochondrial genome-encoded proteins, including at least some of the essential transmembrane subunits of the mitochondrial respiratory chain. The mitoribosomes are attached to the mitochondrial inner membrane and translation products are cotranslationally integrated into the membrane. bL36m may be involved in a process influencing telomere capping. In Saccharomyces cerevisiae (strain ATCC 204508 / S288c) (Baker's yeast), this protein is Large ribosomal subunit protein bL36m (RTC6).